The chain runs to 687 residues: Methionine--tRNA ligase (687 aa).

Positions 14-24 (PYANGYIHLGH) match the 'HIGH' region motif. 4 residues coordinate Zn(2+): cysteine 145, cysteine 148, cysteine 158, and cysteine 161. The 'KMSKS' region signature appears at 329–333 (KMSKS). Residue lysine 332 coordinates ATP. Residues 585–687 (DFDKVDLRIG…DGAQVGQRVK (103 aa)) enclose the tRNA-binding domain.

It belongs to the class-I aminoacyl-tRNA synthetase family. MetG type 1 subfamily. Homodimer. The cofactor is Zn(2+).

Its subcellular location is the cytoplasm. The enzyme catalyses tRNA(Met) + L-methionine + ATP = L-methionyl-tRNA(Met) + AMP + diphosphate. Functionally, is required not only for elongation of protein synthesis but also for the initiation of all mRNA translation through initiator tRNA(fMet) aminoacylation. In Bdellovibrio bacteriovorus (strain ATCC 15356 / DSM 50701 / NCIMB 9529 / HD100), this protein is Methionine--tRNA ligase.